Here is a 142-residue protein sequence, read N- to C-terminus: Translation initiation factor 2 subunit beta (142 aa).

It belongs to the eIF-2-beta/eIF-5 family. In terms of assembly, heterotrimer composed of an alpha, a beta and a gamma chain.

In terms of biological role, eIF-2 functions in the early steps of protein synthesis by forming a ternary complex with GTP and initiator tRNA. In Staphylothermus marinus (strain ATCC 43588 / DSM 3639 / JCM 9404 / F1), this protein is Translation initiation factor 2 subunit beta.